A 222-amino-acid chain; its full sequence is Thymidylate kinase (222 aa).

ATP-binding positions include 29–34 and Arg-111; that span reads RVGKST. An LID region spans residues 146-170; that stretch reads LSMSSEDATKRGEYGGERYEKLEFQ.

This sequence belongs to the thymidylate kinase family. As to quaternary structure, homodimer. Mg(2+) serves as cofactor.

The enzyme catalyses dTMP + ATP = dTDP + ADP. The protein operates within pyrimidine metabolism; dTTP biosynthesis. Functionally, catalyzes the phosphorylation of thymidine monophosphate (dTMP) to thymidine diphosphate (dTDP), the immediate precursor for the DNA building block dTTP, with ATP as the preferred phosphoryl donor in the presence of Mg(2+). The protein is Thymidylate kinase (dtymk) of Dictyostelium discoideum (Social amoeba).